Consider the following 24-residue polypeptide: Superoxide dismutase [Cu-Zn], chloroplastic (24 aa).

It belongs to the Cu-Zn superoxide dismutase family. In terms of assembly, homodimer. Requires Cu cation as cofactor. Zn(2+) serves as cofactor.

Its subcellular location is the plastid. The protein localises to the chloroplast. The catalysed reaction is 2 superoxide + 2 H(+) = H2O2 + O2. Its function is as follows. Destroys radicals which are normally produced within the cells and which are toxic to biological systems. This is Superoxide dismutase [Cu-Zn], chloroplastic from Picea abies (Norway spruce).